We begin with the raw amino-acid sequence, 466 residues long: Endoglucanase E-5 (466 aa).

The signal sequence occupies residues M1–A36. Positions A37 to G139 constitute a CBM2 domain. Residues C129–E166 form a disordered region. Residue E299 is the Proton donor of the active site. The active-site Nucleophile is E391.

Belongs to the glycosyl hydrolase 5 (cellulase A) family.

The catalysed reaction is Endohydrolysis of (1-&gt;4)-beta-D-glucosidic linkages in cellulose, lichenin and cereal beta-D-glucans.. It participates in glycan metabolism; cellulose degradation. This chain is Endoglucanase E-5 (celE), found in Thermobifida fusca (Thermomonospora fusca).